Consider the following 164-residue polypeptide: Phosphopantetheine adenylyltransferase (164 aa).

Position 9 (Ser9) interacts with substrate. ATP contacts are provided by residues 9-10 (SF) and His17. 3 residues coordinate substrate: Lys41, Leu73, and Lys87. Residues 88–90 (GLR), Glu98, and 122–128 (YSYLSSS) contribute to the ATP site.

This sequence belongs to the bacterial CoaD family. In terms of assembly, homohexamer. Mg(2+) serves as cofactor.

It localises to the cytoplasm. It catalyses the reaction (R)-4'-phosphopantetheine + ATP + H(+) = 3'-dephospho-CoA + diphosphate. The protein operates within cofactor biosynthesis; coenzyme A biosynthesis; CoA from (R)-pantothenate: step 4/5. Functionally, reversibly transfers an adenylyl group from ATP to 4'-phosphopantetheine, yielding dephospho-CoA (dPCoA) and pyrophosphate. In Rhodococcus erythropolis (strain PR4 / NBRC 100887), this protein is Phosphopantetheine adenylyltransferase.